A 112-amino-acid chain; its full sequence is CRISPR-associated endoribonuclease Cas2 2 (112 aa).

Asp15 contributes to the Mg(2+) binding site.

The protein belongs to the CRISPR-associated endoribonuclease Cas2 protein family. Homodimer, forms a heterotetramer with a Cas1 homodimer. Requires Mg(2+) as cofactor.

CRISPR (clustered regularly interspaced short palindromic repeat), is an adaptive immune system that provides protection against mobile genetic elements (viruses, transposable elements and conjugative plasmids). CRISPR clusters contain sequences complementary to antecedent mobile elements and target invading nucleic acids. CRISPR clusters are transcribed and processed into CRISPR RNA (crRNA). Functions as a ssRNA-specific endoribonuclease. Involved in the integration of spacer DNA into the CRISPR cassette. The sequence is that of CRISPR-associated endoribonuclease Cas2 2 from Rhodospirillum rubrum (strain ATCC 11170 / ATH 1.1.1 / DSM 467 / LMG 4362 / NCIMB 8255 / S1).